The sequence spans 103 residues: Small ribosomal subunit protein uS10 (103 aa).

The protein belongs to the universal ribosomal protein uS10 family. In terms of assembly, part of the 30S ribosomal subunit.

Functionally, involved in the binding of tRNA to the ribosomes. The protein is Small ribosomal subunit protein uS10 of Verminephrobacter eiseniae (strain EF01-2).